The sequence spans 402 residues: Tryptophan synthase beta chain (402 aa).

Residue Lys91 is modified to N6-(pyridoxal phosphate)lysine.

Belongs to the TrpB family. As to quaternary structure, tetramer of two alpha and two beta chains. Pyridoxal 5'-phosphate serves as cofactor.

It catalyses the reaction (1S,2R)-1-C-(indol-3-yl)glycerol 3-phosphate + L-serine = D-glyceraldehyde 3-phosphate + L-tryptophan + H2O. The protein operates within amino-acid biosynthesis; L-tryptophan biosynthesis; L-tryptophan from chorismate: step 5/5. Its function is as follows. The beta subunit is responsible for the synthesis of L-tryptophan from indole and L-serine. The protein is Tryptophan synthase beta chain of Streptococcus thermophilus (strain ATCC BAA-250 / LMG 18311).